The primary structure comprises 144 residues: Snake venom vascular endothelial growth factor toxin VR-1 (144 aa).

Positions 1–24 (MAAYLLAVAILFCIQGWPSGTVQG) are cleaved as a signal peptide. Glutamine 25 bears the Pyrrolidone carboxylic acid mark. 3 cysteine pairs are disulfide-bonded: cysteine 38/cysteine 80, cysteine 69/cysteine 115, and cysteine 73/cysteine 117. Over residues 120–134 (RWKQGEPEGPKEPRR) the composition is skewed to basic and acidic residues. The segment at 120–144 (RWKQGEPEGPKEPRRGGVRAKFPFD) is disordered. Residues 134–144 (RGGVRAKFPFD) constitute a propeptide that is removed on maturation.

This sequence belongs to the PDGF/VEGF growth factor family. Snake venom VEGF subfamily. As to quaternary structure, homodimer; disulfide-linked. Interacts with VEGF receptor-2 (KDR) with high affinity, but not with VEGF receptor-1 (Flt-1), VEGF receptor-3 (FLT4), and neuropilin-1 (NRP1). Expressed by the venom gland.

The protein localises to the secreted. Its function is as follows. Snake venom VEGFs may contribute to venom dispersion and prey subjugation by inducing vascular permeability and hypotension. This protein induces angiogenesis probably through VEGF receptor (KDR/VEGFR-2) signaling, as well as drastic hypotension. The hypotension is mediated by nitric oxide, which is produced by VEGF-activated endothelium NO synthase. May also induce vascular permeability. This Daboia russelii (Russel's viper) protein is Snake venom vascular endothelial growth factor toxin VR-1.